The following is a 209-amino-acid chain: MTKGILGKKLGMTQVFGPNGTATAVTVIEVGSNVVLQKKDVETDGYEAIQIGFEDKKEQRANKPEKGHAAKANTAPKRFIREIRGVNLADYEVGQELKADIFAEGEMVDVAGVSKGKGFQGAIKRHNQSRGPMAHGSRYHRGPGSMGAVAPNRVFKGQTLPGQMGGDNVTIQNLEVIKVDTERNLVLVKGSVPGPKNSCVLVSTAVKKN.

The protein belongs to the universal ribosomal protein uL3 family. As to quaternary structure, part of the 50S ribosomal subunit. Forms a cluster with proteins L14 and L19.

Its function is as follows. One of the primary rRNA binding proteins, it binds directly near the 3'-end of the 23S rRNA, where it nucleates assembly of the 50S subunit. In Brevibacillus brevis (strain 47 / JCM 6285 / NBRC 100599), this protein is Large ribosomal subunit protein uL3.